Reading from the N-terminus, the 287-residue chain is 4-hydroxybenzoate octaprenyltransferase (287 aa).

6 consecutive transmembrane segments (helical) span residues 41-61, 89-109, 133-153, 158-178, 202-224, and 267-287; these read WPLLVIFSLGTLLMRSAGCAM, WEAIAIAVGLAFVSFLLILPL, FFAIPQAYLGIAFGFGIPMAF, DTVPTIAWVMLIANIFWSVAY, FGRFDVAAVMLCYAVTLGIYVWI, and NNWLGGVLFAGIAAHYLLAGS.

This sequence belongs to the UbiA prenyltransferase family. Requires Mg(2+) as cofactor.

It localises to the cell inner membrane. The catalysed reaction is all-trans-octaprenyl diphosphate + 4-hydroxybenzoate = 4-hydroxy-3-(all-trans-octaprenyl)benzoate + diphosphate. Its pathway is cofactor biosynthesis; ubiquinone biosynthesis. Its function is as follows. Catalyzes the prenylation of para-hydroxybenzoate (PHB) with an all-trans polyprenyl group. Mediates the second step in the final reaction sequence of ubiquinone-8 (UQ-8) biosynthesis, which is the condensation of the polyisoprenoid side chain with PHB, generating the first membrane-bound Q intermediate 3-octaprenyl-4-hydroxybenzoate. This Burkholderia lata (strain ATCC 17760 / DSM 23089 / LMG 22485 / NCIMB 9086 / R18194 / 383) protein is 4-hydroxybenzoate octaprenyltransferase.